Here is a 350-residue protein sequence, read N- to C-terminus: Holliday junction branch migration complex subunit RuvB (350 aa).

The tract at residues 1–183 (MSAERLVNPH…FVAVHRLVFY (183 aa)) is large ATPase domain (RuvB-L). ATP contacts are provided by residues leucine 22, arginine 23, glycine 64, lysine 67, threonine 68, serine 69, 130-132 (EDF), arginine 173, tyrosine 183, and arginine 220. Threonine 68 contributes to the Mg(2+) binding site. Residues 184-254 (SDAAMTEIVS…VAREALAQLE (71 aa)) are small ATPAse domain (RuvB-S). A head domain (RuvB-H) region spans residues 257–350 (ELGLDENDRR…ESGPQQGTLF (94 aa)). The DNA site is built by arginine 312 and arginine 317.

Belongs to the RuvB family. In terms of assembly, homohexamer. Forms an RuvA(8)-RuvB(12)-Holliday junction (HJ) complex. HJ DNA is sandwiched between 2 RuvA tetramers; dsDNA enters through RuvA and exits via RuvB. An RuvB hexamer assembles on each DNA strand where it exits the tetramer. Each RuvB hexamer is contacted by two RuvA subunits (via domain III) on 2 adjacent RuvB subunits; this complex drives branch migration. In the full resolvosome a probable DNA-RuvA(4)-RuvB(12)-RuvC(2) complex forms which resolves the HJ.

It is found in the cytoplasm. It carries out the reaction ATP + H2O = ADP + phosphate + H(+). Its function is as follows. The RuvA-RuvB-RuvC complex processes Holliday junction (HJ) DNA during genetic recombination and DNA repair, while the RuvA-RuvB complex plays an important role in the rescue of blocked DNA replication forks via replication fork reversal (RFR). RuvA specifically binds to HJ cruciform DNA, conferring on it an open structure. The RuvB hexamer acts as an ATP-dependent pump, pulling dsDNA into and through the RuvAB complex. RuvB forms 2 homohexamers on either side of HJ DNA bound by 1 or 2 RuvA tetramers; 4 subunits per hexamer contact DNA at a time. Coordinated motions by a converter formed by DNA-disengaged RuvB subunits stimulates ATP hydrolysis and nucleotide exchange. Immobilization of the converter enables RuvB to convert the ATP-contained energy into a lever motion, pulling 2 nucleotides of DNA out of the RuvA tetramer per ATP hydrolyzed, thus driving DNA branch migration. The RuvB motors rotate together with the DNA substrate, which together with the progressing nucleotide cycle form the mechanistic basis for DNA recombination by continuous HJ branch migration. Branch migration allows RuvC to scan DNA until it finds its consensus sequence, where it cleaves and resolves cruciform DNA. This is Holliday junction branch migration complex subunit RuvB from Chloroflexus aggregans (strain MD-66 / DSM 9485).